A 429-amino-acid chain; its full sequence is 26S proteasome regulatory subunit RPN7 (429 aa).

Phosphoserine is present on residues S8 and S77. One copy of the TPR repeat lies at 131 to 164; that stretch reads AQAWINLGEYYAQIGDKDNAEKTLGKSLSKAIST. The 173-residue stretch at 223–395 folds into the PCI domain; sequence NFKEAAKLLV…GIVETNRPDN (173 aa).

As to quaternary structure, the 26S proteasome is composed of a core protease, known as the 20S proteasome, capped at one or both ends by the 19S regulatory complex (RC). The RC is composed of at least 18 different subunits in two subcomplexes, the base and the lid, which form the portions proximal and distal to the 20S proteolytic core, respectively. Component of the lid subcomplex of the 19S RC.

It is found in the nucleus. Component of the 19S cap proteasome complex which acts as a regulatory subunit of the 26S proteasome, involved in the ATP-dependent degradation of ubiquitinated proteins. The sequence is that of 26S proteasome regulatory subunit RPN7 from Saccharomyces cerevisiae (strain ATCC 204508 / S288c) (Baker's yeast).